A 417-amino-acid chain; its full sequence is Serpin A3-7 (417 aa).

A signal peptide spans 1 to 25 (MRTERTSFLLALGLLVSGFCSRVHC). 4 N-linked (GlcNAc...) asparagine glycosylation sites follow: Asn-103, Asn-183, Asn-221, and Asn-267.

Belongs to the serpin family. Homodimer.

It is found in the cytoplasmic vesicle. It localises to the secretory vesicle. The protein resides in the chromaffin granule. Its subcellular location is the secreted. In terms of biological role, serine protease inhibitor. This Bos taurus (Bovine) protein is Serpin A3-7.